Here is a 149-residue protein sequence, read N- to C-terminus: UPF0251 protein Moth_1655 (149 aa).

Residues 129 to 149 are disordered; that stretch reads AGRGPGRGRCHRHGRFGEGEH.

Belongs to the UPF0251 family.

The polypeptide is UPF0251 protein Moth_1655 (Moorella thermoacetica (strain ATCC 39073 / JCM 9320)).